The sequence spans 202 residues: Small ribosomal subunit protein uS4 (202 aa).

Residues 1-13 show a composition bias toward basic residues; it reads MSRYRGPRLRITR. The interval 1-43 is disordered; the sequence is MSRYRGPRLRITRRLGDLPGLTRKAAKRSHPPGQHGQARRKRS. Residues 90–152 enclose the S4 RNA-binding domain; it reads NRLDNVCFRL…KGSKKLAEAN (63 aa).

The protein belongs to the universal ribosomal protein uS4 family. Part of the 30S ribosomal subunit. Contacts protein S5. The interaction surface between S4 and S5 is involved in control of translational fidelity.

Functionally, one of the primary rRNA binding proteins, it binds directly to 16S rRNA where it nucleates assembly of the body of the 30S subunit. In terms of biological role, with S5 and S12 plays an important role in translational accuracy. In Prochlorococcus marinus (strain MIT 9303), this protein is Small ribosomal subunit protein uS4.